Consider the following 265-residue polypeptide: 2-C-methyl-D-erythritol 4-phosphate cytidylyltransferase (265 aa).

Over residues 231–241 (DRGGASREAER) the composition is skewed to basic and acidic residues. A disordered region spans residues 231–265 (DRGGASREAERSAMPSAATSVFSGARSAASGSEEV). Low complexity predominate over residues 253-265 (SGARSAASGSEEV).

The protein belongs to the IspD/TarI cytidylyltransferase family. IspD subfamily.

The catalysed reaction is 2-C-methyl-D-erythritol 4-phosphate + CTP + H(+) = 4-CDP-2-C-methyl-D-erythritol + diphosphate. The protein operates within isoprenoid biosynthesis; isopentenyl diphosphate biosynthesis via DXP pathway; isopentenyl diphosphate from 1-deoxy-D-xylulose 5-phosphate: step 2/6. Functionally, catalyzes the formation of 4-diphosphocytidyl-2-C-methyl-D-erythritol from CTP and 2-C-methyl-D-erythritol 4-phosphate (MEP). This chain is 2-C-methyl-D-erythritol 4-phosphate cytidylyltransferase, found in Xanthomonas campestris pv. campestris (strain B100).